Reading from the N-terminus, the 398-residue chain is Succinate--CoA ligase [ADP-forming] subunit beta (398 aa).

The ATP-grasp domain maps to 9–254 (KALLKSFGAP…KTEEDAKEIE (246 aa)). ATP-binding positions include K46, 53-55 (GRG), E109, A112, and E117. The Mg(2+) site is built by N209 and D223. Substrate is bound by residues N274 and 331 to 333 (GIM).

This sequence belongs to the succinate/malate CoA ligase beta subunit family. As to quaternary structure, heterotetramer of two alpha and two beta subunits. Mg(2+) serves as cofactor.

The catalysed reaction is succinate + ATP + CoA = succinyl-CoA + ADP + phosphate. The enzyme catalyses GTP + succinate + CoA = succinyl-CoA + GDP + phosphate. The protein operates within carbohydrate metabolism; tricarboxylic acid cycle; succinate from succinyl-CoA (ligase route): step 1/1. Its function is as follows. Succinyl-CoA synthetase functions in the citric acid cycle (TCA), coupling the hydrolysis of succinyl-CoA to the synthesis of either ATP or GTP and thus represents the only step of substrate-level phosphorylation in the TCA. The beta subunit provides nucleotide specificity of the enzyme and binds the substrate succinate, while the binding sites for coenzyme A and phosphate are found in the alpha subunit. This Allorhizobium ampelinum (strain ATCC BAA-846 / DSM 112012 / S4) (Agrobacterium vitis (strain S4)) protein is Succinate--CoA ligase [ADP-forming] subunit beta.